The primary structure comprises 376 residues: N-acetyldiaminopimelate deacetylase (376 aa).

Asp69 is a catalytic residue. Glu128 functions as the Proton acceptor in the catalytic mechanism.

It belongs to the peptidase M20A family. N-acetyldiaminopimelate deacetylase subfamily.

The enzyme catalyses N-acetyl-(2S,6S)-2,6-diaminopimelate + H2O = (2S,6S)-2,6-diaminopimelate + acetate. Its pathway is amino-acid biosynthesis; L-lysine biosynthesis via DAP pathway; LL-2,6-diaminopimelate from (S)-tetrahydrodipicolinate (acetylase route): step 3/3. Functionally, catalyzes the conversion of N-acetyl-diaminopimelate to diaminopimelate and acetate. The sequence is that of N-acetyldiaminopimelate deacetylase from Bacillus cereus (strain AH820).